The sequence spans 1251 residues: Cyclic nucleotide-gated channel beta-1 (1251 aa).

4 disordered regions span residues 1–75 (MLGW…QETK), 121–151 (ITED…EAQD), 172–252 (QPPK…TRDP), and 314–561 (EDAH…STNS). At 1–656 (MLGWVQRVLP…SIDPLTNLMY (656 aa)) the chain is on the cytoplasmic side. The segment covering 23-50 (EEEEVEPEPEMEAEVEPEPNPEEAETES) has biased composition (acidic residues). Residues 238 to 247 (GSQAQTSSLP) show a composition bias toward polar residues. Basic and acidic residues predominate over residues 335–352 (EENKAVEKMPRELSRIEE). The segment covering 353–373 (EKEDEEEEEEEEEEEEEEEVT) has biased composition (acidic residues). Residues 404 to 423 (KLWEEVGEEAKKEAEEKAKE) show a composition bias toward basic and acidic residues. The segment covering 424-434 (EAEEVAEEEAE) has biased composition (acidic residues). Over residues 435-446 (KEPQDWAETKEE) the composition is skewed to basic and acidic residues. Residues 557–567 (ASTNSAIINDR) are calmodulin-binding CaM1. Positions 568–578 (LQELVKLFKER) match the IQ-like motif. A disordered region spans residues 585-619 (KLIDPDVTSDEESPKPSPAKKAPEPAPDTKPAEAE). The chain crosses the membrane as a helical span at residues 657–678 (VLWLFFVVMAWNWNCWLIPVRW). Residues 679-687 (AFPYQTPDN) lie on the Extracellular side of the membrane. Residues 688-709 (IHHWLLMDYLCDLIYFLDITVF) traverse the membrane as a helical segment. At 710–724 (QTRLQFVRGGDIITD) the chain is on the cytoplasmic side. Residues 725-744 (KKDMRNNYLKSRRFKMDLLS) form a helical membrane-spanning segment. Residues 745 to 760 (LLPLDFLYLKVGVNPL) lie on the Extracellular side of the membrane. The helical transmembrane segment at 761–773 (LRLPRCLKYMAFF) threads the bilayer. Over 774 to 785 (EFNSRLESILSK) the chain is Cytoplasmic. The chain crosses the membrane as a helical span at residues 786–808 (AYVYRVIRTTAYLLYSLHLNSCL). Residues 786–885 (AYVYRVIRTT…IGQMRDVVGA (100 aa)) are ion conduction pathway. The Extracellular segment spans residues 809–831 (YYWASAYQGLGSTHWVYDGVGNS). 2 helical membrane-spanning segments follow: residues 832-858 (YIRC…LFEI) and 859-884 (VFQL…DVVG). The Cytoplasmic portion of the chain corresponds to 885-1251 (AATAGQTYYR…MPEEREEKAE (367 aa)). The C-linker stretch occupies residues 888 to 964 (AGQTYYRSCM…NIVSKVALFQ (77 aa)). The tract at residues 968 to 1084 (RQMIFDMLKR…LLRKKARRML (117 aa)) is cyclic nucleotide-binding domain. 5 residues coordinate 3',5'-cyclic GMP: Gly-1029, Glu-1030, Ser-1032, Arg-1042, and Thr-1043. Residue Arg-1042 coordinates 3',5'-cyclic AMP. The interval 1148 to 1154 (QQELVEQ) is calmodulin-binding CaM2. Residues 1151 to 1251 (LVEQAKSSQD…MPEEREEKAE (101 aa)) form a disordered region. A compositionally biased stretch (pro residues) spans 1183 to 1203 (PPAPRTPPEPPGSPPSSPPPA). Positions 1242–1251 (MPEEREEKAE) are enriched in basic and acidic residues.

It belongs to the cyclic nucleotide-gated cation channel (TC 1.A.1.5) family. CNGB1 subfamily. In terms of assembly, the rod cyclic nucleotide-gated channel is a heterotetramer composed of CNGA1 and CNGB1 subunits with 3:1 stoichiometry. CNGA1:CNGB1 channel binds Ca(2+)-bound CALM1 via CaM1 and CaM2 regions of the CNGB1 subunit; this interaction modulates the affinity of the channel for cNMPs in response to intracellular Ca(2+) levels. The olfactory cyclic nucleotide-gated channel is a heterotetramer composed of CNGA2, CNGA4 and CNGB1 subunits with 2:1:1 stoichiometry.

It localises to the cell membrane. It is found in the cell projection. The protein resides in the cilium membrane. The catalysed reaction is Ca(2+)(in) = Ca(2+)(out). It carries out the reaction Na(+)(in) = Na(+)(out). It catalyses the reaction K(+)(in) = K(+)(out). The enzyme catalyses NH4(+)(in) = NH4(+)(out). The catalysed reaction is Rb(+)(in) = Rb(+)(out). It carries out the reaction Li(+)(in) = Li(+)(out). It catalyses the reaction Cs(+)(in) = Cs(+)(out). Functionally, pore-forming subunit of the rod cyclic nucleotide-gated channel. Mediates rod photoresponses at dim light converting transient changes in intracellular cGMP levels into electrical signals. In the dark, cGMP levels are high and keep the channel open enabling a steady inward current carried by Na(+) and Ca(2+) ions that leads to membrane depolarization and neurotransmitter release from synaptic terminals. Upon photon absorption cGMP levels decline leading to channel closure and membrane hyperpolarization that ultimately slows neurotransmitter release and signals the presence of light, the end point of the phototransduction cascade. Pore-forming subunit of the olfactory cyclic nucleotide-gated channel. Operates in the cilia of olfactory sensory neurons where chemical stimulation of the odorant is converted to an electrical signal. Mediates odorant-induced cAMP-dependent Ca(2+) influx triggering neuron depolarization. The rise of intracellular Ca(2+) levels potentiates the olfactory response by activating Ca(2+)-dependent Cl(-) channels, but it also serves as a negative feedback signal to desensitize the channel for rapid adaptation to odorants. Conducts cGMP- and cAMP-gated ion currents, with permeability for monovalent and divalent cations. The selectivity for Ca(2+) over Na(+) increases with cGMP concentrations, whereas the selectivity among monovalent ions is independent of the cGMP levels. Its function is as follows. High affinity rod photoreceptor phosphodiesterase (PDE6)-binding protein that modulates its catalytic properties: it is a regulator of spontaneous activation of rod PDE6, thereby serving to lower rod photoreceptor 'dark noise' and allowing these sensory cells to operate at the single photon detection limit. In Homo sapiens (Human), this protein is Cyclic nucleotide-gated channel beta-1.